Reading from the N-terminus, the 235-residue chain is Elongation factor Tu, chloroplastic (235 aa).

The tr-type G domain occupies K1–T125. Residue N47–D50 participates in GTP binding.

It belongs to the TRAFAC class translation factor GTPase superfamily. Classic translation factor GTPase family. EF-Tu/EF-1A subfamily.

Its subcellular location is the plastid. The protein resides in the chloroplast. The enzyme catalyses GTP + H2O = GDP + phosphate + H(+). GTP hydrolase that promotes the GTP-dependent binding of aminoacyl-tRNA to the A-site of ribosomes during protein biosynthesis. The sequence is that of Elongation factor Tu, chloroplastic (tufA) from Bryopsis plumosa (Green alga).